Consider the following 184-residue polypeptide: UPF0301 protein ABSDF3201 (184 aa).

The protein belongs to the UPF0301 (AlgH) family.

The polypeptide is UPF0301 protein ABSDF3201 (Acinetobacter baumannii (strain SDF)).